The primary structure comprises 872 residues: MKTMTSAEVRQMFLDFFKSKGHTVEPSQSLVPVNDPTLLWINSGVATLKKYFDGSVVPENPRLTNAQKAIRTNDIENVGKTARHHTMFEMLGNFSIGDYFRKEAIAFAWELLTSSEWFEFPAEKLYITYYPADKDTYNRWVEVGVDPTHLVPIEDNFWEIGAGPSGPDTEIFFDRGEVYDPEHVGLKLLAEDIENDRYIEIWNIVLSQFNADPSIPRSEYPELPQKNIDTGMGLERMVCIIQGGKTNFDTDLFLPIIREIEKLSGKTYSPDSENMSFKVIADHIRSLSFAIGDGALPGNEGRGYVLRRLLRRAVMHGKKLGIQGKFLASLVPTVGKIMQSYYPEVLEKEDFIMQIIDREEETFNRTIDAGQKLIDELLLNLKSEGKDRLEGADIFRLYDTYGFPVELTEELAEDEGFKIDHEGFKVAMKAQQERARAAVVKGGSMGAQNETLSSIEVESEFLYEDKTTQGKLLVSIQDDEIVDEVSGKAQLVFDVTPFYAEMGGQVADHGVIKDAEGQVVANVLDVQHAPHGQNLHSVETLSPLKVGESYTLEIDKERRAAVVKNHTATHLLHAALHNIVGNHALQAGSLNEVEFLRFDFTHFAQVTKEELAEIERQVNEVIWQSLKVETVETDIATAKEMGAMALFGEKYGKNVRVVKIGDYSIELCGGTHTQTTSEIGLFKIVKEEGIGSGVRRIIAVTGQKAYEAFKDAENTLNEVATMVKAPQTSQVLAKVTSLQDELKTAQKENDALAGKLAASQSDEIFKNVQTAGSLNFIASEVTVPDANGLRNLADIWKQKELSDVLVLVAKIGEKVSLLVASKSSDVKAGNLVKELAPFVDGRGGGKPDMAMAGGSKAAGIPELLAAVAEKLA.

Zn(2+) contacts are provided by H566, H570, C668, and H672.

This sequence belongs to the class-II aminoacyl-tRNA synthetase family. Zn(2+) serves as cofactor.

The protein localises to the cytoplasm. It carries out the reaction tRNA(Ala) + L-alanine + ATP = L-alanyl-tRNA(Ala) + AMP + diphosphate. Functionally, catalyzes the attachment of alanine to tRNA(Ala) in a two-step reaction: alanine is first activated by ATP to form Ala-AMP and then transferred to the acceptor end of tRNA(Ala). Also edits incorrectly charged Ser-tRNA(Ala) and Gly-tRNA(Ala) via its editing domain. This is Alanine--tRNA ligase from Lactococcus lactis subsp. lactis (strain IL1403) (Streptococcus lactis).